An 860-amino-acid chain; its full sequence is SH2 domain-containing protein 3C (860 aa).

Ser-22 bears the Phosphoserine mark. Disordered regions lie at residues 51-117 (EATQ…PPGL) and 130-180 (PLED…PEAG). The segment covering 162–175 (ERPPRDVHSERAAG) has biased composition (basic and acidic residues). Residues 220-319 (WYHGRIPREV…QSGAIIYCPV (100 aa)) form the SH2 domain. 2 positions are modified to phosphotyrosine: Tyr-278 and Tyr-283. The interval 335 to 537 (GQGSSKPASP…LSENGAPEGD (203 aa)) is disordered. Phosphoserine is present on Ser-359. Low complexity-rich tracts occupy residues 405–420 (SPMS…PAYS), 427–443 (AAPA…SPVA), and 479–490 (SPSPSLSSYSDP). The residue at position 440 (Ser-440) is a Phosphoserine. The 269-residue stretch at 586–854 (DARTLARHVT…TALSHKLEPA (269 aa)) folds into the Ras-GEF domain. The residue at position 793 (Tyr-793) is a Phosphotyrosine.

As to quaternary structure, component of a complex comprised of SH2D3C, BCAR1/CAS, and CRK. Within the complex, interacts with CRK and (via C-terminus) with BCAR1/CAS (via C-terminus). Interacts with NEDD9/HEF1. Interacts with EPHB2. In terms of assembly, interacts with NEDD9/HEF1. Interacts with BCAR1/CAS. Interacts with PTK2B. Interacts (via C-terminus) with BCAR1/CAS (via C-terminus). Interacts with IGF1. Phosphorylated by MAPK/ERK upon T-cell receptor stimulation in T-cells. Ubiquitously expressed.

Its subcellular location is the cytoplasm. The protein localises to the cell membrane. The protein resides in the cell projection. It is found in the axon. It localises to the ruffle membrane. In terms of biological role, acts as an adapter protein that mediates cell signaling pathways involved in cellular functions such as cell adhesion and migration, tissue organization, and the regulation of the immune response. Plays a role in integrin-mediated cell adhesion through BCAR1-CRK-RAPGEF1 signaling and activation of the small GTPase RAP1. Promotes cell migration and invasion through the extracellular matrix. Required for marginal zone B-cell development and thymus-independent type 2 immune responses. Mediates migration and adhesion of B cells in the splenic marginal zone via promoting hyperphosphorylation of NEDD9/CASL. Plays a role in CXCL13-induced chemotaxis of B-cells. Plays a role in the migration of olfactory sensory neurons (OSNs) into the forebrain and the innervation of the olfactory bulb by the OSN axons during development. Required for the efficient tyrosine phosphorylation of BCAR1 in OSN axons. Important regulator of chemokine-induced, integrin-mediated T lymphocyte adhesion and migration, acting upstream of RAP1. Required for tissue-specific adhesion of T lymphocytes to peripheral tissues. Required for basal and CXCL2 stimulated serine-threonine phosphorylation of NEDD9. May be involved in the regulation of T-cell receptor-mediated IL2 production through the activation of the JNK pathway in T-cells. Its function is as follows. May be involved in the BCAR1/CAS-mediated JNK activation pathway. In Homo sapiens (Human), this protein is SH2 domain-containing protein 3C (SH2D3C).